The following is a 403-amino-acid chain: Probable tRNA sulfurtransferase (403 aa).

Residues 60 to 165 (QLAEERLKPI…KEGVFLSCRT (106 aa)) form the THUMP domain. ATP-binding positions include 183 to 184 (ML), 208 to 209 (HF), Arg265, Gly287, and Gln296.

Belongs to the ThiI family.

It localises to the cytoplasm. The enzyme catalyses [ThiI sulfur-carrier protein]-S-sulfanyl-L-cysteine + a uridine in tRNA + 2 reduced [2Fe-2S]-[ferredoxin] + ATP + H(+) = [ThiI sulfur-carrier protein]-L-cysteine + a 4-thiouridine in tRNA + 2 oxidized [2Fe-2S]-[ferredoxin] + AMP + diphosphate. The catalysed reaction is [ThiS sulfur-carrier protein]-C-terminal Gly-Gly-AMP + S-sulfanyl-L-cysteinyl-[cysteine desulfurase] + AH2 = [ThiS sulfur-carrier protein]-C-terminal-Gly-aminoethanethioate + L-cysteinyl-[cysteine desulfurase] + A + AMP + 2 H(+). Its pathway is cofactor biosynthesis; thiamine diphosphate biosynthesis. Catalyzes the ATP-dependent transfer of a sulfur to tRNA to produce 4-thiouridine in position 8 of tRNAs, which functions as a near-UV photosensor. Also catalyzes the transfer of sulfur to the sulfur carrier protein ThiS, forming ThiS-thiocarboxylate. This is a step in the synthesis of thiazole, in the thiamine biosynthesis pathway. The sulfur is donated as persulfide by IscS. In Listeria monocytogenes serotype 4a (strain HCC23), this protein is Probable tRNA sulfurtransferase.